A 352-amino-acid chain; its full sequence is Glycoprotein integral membrane protein 1 (352 aa).

The first 25 residues, 1-25 (MASRCKIHLTVAYLLILCILASAQS), serve as a signal peptide directing secretion. The Extracellular portion of the chain corresponds to 26 to 281 (KQMTTETVVL…KLRRFLSDSV (256 aa)). N-linked (GlcNAc...) asparagine glycosylation is found at Asn-36, Asn-44, Asn-89, Asn-109, Asn-151, and Asn-197. The tract at residues 206-245 (NSETTQEEIAAPGKLPETPLRMDPETLYESREEEERRSDS) is disordered. The segment covering 225–244 (LRMDPETLYESREEEERRSD) has biased composition (basic and acidic residues). A helical membrane pass occupies residues 282–302 (PLFFLVMWVVVVGVAGSAVVI). The Cytoplasmic segment spans residues 303-352 (KILDLIFPSCEHRGFFHLNPETLMPDDEKVSLIDNMEGDMTEKSILLIEK).

The protein resides in the membrane. In Danio rerio (Zebrafish), this protein is Glycoprotein integral membrane protein 1 (ginm1).